Here is a 111-residue protein sequence, read N- to C-terminus: Translation initiation factor 1A (111 aa).

The segment covering 1–13 (MKKSNNKNNHKNN) has biased composition (basic residues). Positions 1 to 30 (MKKSNNKNNHKNNHNNNQGGENIRVRSPRR) are disordered. Positions 23–96 (IRVRSPRRGE…EKADVIWRYT (74 aa)) constitute an S1-like domain.

Belongs to the eIF-1A family.

In terms of biological role, seems to be required for maximal rate of protein biosynthesis. Enhances ribosome dissociation into subunits and stabilizes the binding of the initiator Met-tRNA(I) to 40 S ribosomal subunits. The protein is Translation initiation factor 1A of Methanosphaera stadtmanae (strain ATCC 43021 / DSM 3091 / JCM 11832 / MCB-3).